A 275-amino-acid chain; its full sequence is 2,3,4,5-tetrahydropyridine-2,6-dicarboxylate N-succinyltransferase (275 aa).

Substrate-binding residues include Arg106 and Asp143.

The protein belongs to the transferase hexapeptide repeat family. Homotrimer.

It is found in the cytoplasm. It catalyses the reaction (S)-2,3,4,5-tetrahydrodipicolinate + succinyl-CoA + H2O = (S)-2-succinylamino-6-oxoheptanedioate + CoA. The protein operates within amino-acid biosynthesis; L-lysine biosynthesis via DAP pathway; LL-2,6-diaminopimelate from (S)-tetrahydrodipicolinate (succinylase route): step 1/3. This Burkholderia mallei (strain NCTC 10247) protein is 2,3,4,5-tetrahydropyridine-2,6-dicarboxylate N-succinyltransferase.